Here is a 267-residue protein sequence, read N- to C-terminus: Probable ribose-5-phosphate isomerase 1 (267 aa).

At Gly-2 the chain carries N-acetylglycine. At Ser-92 the chain carries Phosphoserine.

This sequence belongs to the ribose 5-phosphate isomerase family. In terms of tissue distribution, expressed in roots, cotyledons, leaves and flowers.

It localises to the cytoplasm. The catalysed reaction is aldehydo-D-ribose 5-phosphate = D-ribulose 5-phosphate. Its pathway is carbohydrate degradation; pentose phosphate pathway; D-ribose 5-phosphate from D-ribulose 5-phosphate (non-oxidative stage): step 1/1. Catalyzes the reversible conversion of ribose-5-phosphate to ribulose 5-phosphate. The polypeptide is Probable ribose-5-phosphate isomerase 1 (RPI1) (Arabidopsis thaliana (Mouse-ear cress)).